The following is a 75-amino-acid chain: DNA-directed RNA polymerase subunit Rpo5 (75 aa).

The protein belongs to the archaeal Rpo5/eukaryotic RPB5 RNA polymerase subunit family. In terms of assembly, part of the RNA polymerase complex.

The protein resides in the cytoplasm. The catalysed reaction is RNA(n) + a ribonucleoside 5'-triphosphate = RNA(n+1) + diphosphate. DNA-dependent RNA polymerase (RNAP) catalyzes the transcription of DNA into RNA using the four ribonucleoside triphosphates as substrates. The protein is DNA-directed RNA polymerase subunit Rpo5 of Pyrobaculum aerophilum (strain ATCC 51768 / DSM 7523 / JCM 9630 / CIP 104966 / NBRC 100827 / IM2).